The following is a 353-amino-acid chain: Photosystem II protein D1 (353 aa).

Threonine 2 is modified (N-acetylthreonine). A Phosphothreonine modification is found at threonine 2. The next 3 helical transmembrane spans lie at 29–46 (YIGWFGVLMIPTLLTATS), 118–133 (HFLLGVACYMGREWEL), and 142–156 (WIAVAYSAPVAAATA). Residue histidine 118 participates in chlorophyll a binding. Tyrosine 126 contacts pheophytin a. Aspartate 170 and glutamate 189 together coordinate [CaMn4O5] cluster. The helical transmembrane segment at 197–218 (FHMLGVAGVFGGSLFSAMHGSL) threads the bilayer. Chlorophyll a is bound at residue histidine 198. A quinone-binding positions include histidine 215 and 264-265 (SF). Histidine 215 provides a ligand contact to Fe cation. A Fe cation-binding site is contributed by histidine 272. The chain crosses the membrane as a helical span at residues 274–288 (FLAAWPVVGIWFTAL). [CaMn4O5] cluster-binding residues include histidine 332, glutamate 333, aspartate 342, and alanine 344. A propeptide spanning residues 345–353 (AVEAPSING) is cleaved from the precursor.

Belongs to the reaction center PufL/M/PsbA/D family. PSII is composed of 1 copy each of membrane proteins PsbA, PsbB, PsbC, PsbD, PsbE, PsbF, PsbH, PsbI, PsbJ, PsbK, PsbL, PsbM, PsbT, PsbX, PsbY, PsbZ, Psb30/Ycf12, at least 3 peripheral proteins of the oxygen-evolving complex and a large number of cofactors. It forms dimeric complexes. The D1/D2 heterodimer binds P680, chlorophylls that are the primary electron donor of PSII, and subsequent electron acceptors. It shares a non-heme iron and each subunit binds pheophytin, quinone, additional chlorophylls, carotenoids and lipids. D1 provides most of the ligands for the Mn4-Ca-O5 cluster of the oxygen-evolving complex (OEC). There is also a Cl(-1) ion associated with D1 and D2, which is required for oxygen evolution. The PSII complex binds additional chlorophylls, carotenoids and specific lipids. is required as a cofactor. Post-translationally, tyr-161 forms a radical intermediate that is referred to as redox-active TyrZ, YZ or Y-Z. C-terminally processed by CTPA; processing is essential to allow assembly of the oxygen-evolving complex and thus photosynthetic growth.

Its subcellular location is the plastid. The protein localises to the chloroplast thylakoid membrane. It catalyses the reaction 2 a plastoquinone + 4 hnu + 2 H2O = 2 a plastoquinol + O2. Its function is as follows. Photosystem II (PSII) is a light-driven water:plastoquinone oxidoreductase that uses light energy to abstract electrons from H(2)O, generating O(2) and a proton gradient subsequently used for ATP formation. It consists of a core antenna complex that captures photons, and an electron transfer chain that converts photonic excitation into a charge separation. The D1/D2 (PsbA/PsbD) reaction center heterodimer binds P680, the primary electron donor of PSII as well as several subsequent electron acceptors. This chain is Photosystem II protein D1, found in Chloranthus spicatus (Chulantree).